Reading from the N-terminus, the 401-residue chain is Coenzyme A biosynthesis bifunctional protein CoaBC (401 aa).

Residues Met1 to Ser190 form a phosphopantothenoylcysteine decarboxylase region. The active-site Proton donor is the Cys159. Positions Ile191 to His401 are phosphopantothenate--cysteine ligase. Residues Asp279, Lys289, Pro307–Val310, Phe326, Lys340, and Lys344 each bind CTP.

In the N-terminal section; belongs to the HFCD (homo-oligomeric flavin containing Cys decarboxylase) superfamily. It in the C-terminal section; belongs to the PPC synthetase family. Requires Mg(2+) as cofactor. The cofactor is FMN.

The catalysed reaction is N-[(R)-4-phosphopantothenoyl]-L-cysteine + H(+) = (R)-4'-phosphopantetheine + CO2. The enzyme catalyses (R)-4'-phosphopantothenate + L-cysteine + CTP = N-[(R)-4-phosphopantothenoyl]-L-cysteine + CMP + diphosphate + H(+). It participates in cofactor biosynthesis; coenzyme A biosynthesis; CoA from (R)-pantothenate: step 2/5. The protein operates within cofactor biosynthesis; coenzyme A biosynthesis; CoA from (R)-pantothenate: step 3/5. Functionally, catalyzes two sequential steps in the biosynthesis of coenzyme A. In the first step cysteine is conjugated to 4'-phosphopantothenate to form 4-phosphopantothenoylcysteine. In the second step the latter compound is decarboxylated to form 4'-phosphopantotheine. In Vibrio vulnificus (strain YJ016), this protein is Coenzyme A biosynthesis bifunctional protein CoaBC.